The sequence spans 223 residues: N-terminal Xaa-Pro-Lys N-methyltransferase 1 (223 aa).

Met1 is subject to N-acetylmethionine. N-acetylthreonine; in N-terminal Xaa-Pro-Lys N-methyltransferase 1, N-terminally processed is present on Thr2. Residues Gly69, Arg74, 91-93 (DVT), 119-120 (LQ), and Gln135 contribute to the S-adenosyl-L-methionine site.

Belongs to the methyltransferase superfamily. NTM1 family.

Its subcellular location is the nucleus. It catalyses the reaction N-terminal L-alanyl-L-prolyl-L-lysyl-[protein] + 3 S-adenosyl-L-methionine = N-terminal N,N,N-trimethyl-L-alanyl-L-prolyl-L-lysyl-[protein] + 3 S-adenosyl-L-homocysteine + 3 H(+). The enzyme catalyses N-terminal L-seryl-L-prolyl-L-lysyl-[protein] + 3 S-adenosyl-L-methionine = N-terminal N,N,N-trimethyl-L-seryl-L-prolyl-L-lysyl-[protein] + 3 S-adenosyl-L-homocysteine + 3 H(+). The catalysed reaction is N-terminal L-prolyl-L-prolyl-L-lysyl-[protein] + 2 S-adenosyl-L-methionine = N-terminal N,N-dimethyl-L-prolyl-L-prolyl-L-lysyl-[protein] + 2 S-adenosyl-L-homocysteine + 2 H(+). Functionally, distributive alpha-N-methyltransferase that methylates the N-terminus of target proteins containing the N-terminal motif [Ala/Gly/Pro/Ser]-Pro-Lys when the initiator Met is cleaved. Specifically catalyzes mono-, di- or tri-methylation of the exposed alpha-amino group of the Ala, Gly or Ser residue in the [Ala/Gly/Ser]-Pro-Lys motif and mono- or di-methylation of Pro in the Pro-Pro-Lys motif. Some of the substrates may be primed by NTMT2-mediated monomethylation. Catalyzes the trimethylation of the N-terminal Gly in CENPA (after removal of Met-1). Responsible for the N-terminal methylation of KLHL31, MYL2, MYL3, RB1, RCC1, RPL23A and SET. Required during mitosis for normal bipolar spindle formation and chromosome segregation via its action on RCC1. The sequence is that of N-terminal Xaa-Pro-Lys N-methyltransferase 1 (NTMT1) from Ailuropoda melanoleuca (Giant panda).